The chain runs to 140 residues: Small ribosomal subunit protein uS12 (140 aa).

The residue at position 102 (aspartate 102) is a 3-methylthioaspartic acid.

This sequence belongs to the universal ribosomal protein uS12 family. In terms of assembly, part of the 30S ribosomal subunit. Contacts proteins S8 and S17. May interact with IF1 in the 30S initiation complex.

In terms of biological role, with S4 and S5 plays an important role in translational accuracy. Functionally, interacts with and stabilizes bases of the 16S rRNA that are involved in tRNA selection in the A site and with the mRNA backbone. Located at the interface of the 30S and 50S subunits, it traverses the body of the 30S subunit contacting proteins on the other side and probably holding the rRNA structure together. The combined cluster of proteins S8, S12 and S17 appears to hold together the shoulder and platform of the 30S subunit. The chain is Small ribosomal subunit protein uS12 from Geobacillus stearothermophilus (Bacillus stearothermophilus).